Here is a 392-residue protein sequence, read N- to C-terminus: Galactokinase (392 aa).

37-40 (EHTD) is a substrate binding site. Residues Ser71 and 128–134 (GSGLSSS) contribute to the ATP site. The Mg(2+) site is built by Ser134 and Glu166. Asp178 acts as the Proton acceptor in catalysis. Tyr228 provides a ligand contact to substrate.

This sequence belongs to the GHMP kinase family. GalK subfamily.

The protein localises to the cytoplasm. It catalyses the reaction alpha-D-galactose + ATP = alpha-D-galactose 1-phosphate + ADP + H(+). It participates in carbohydrate metabolism; galactose metabolism. Catalyzes the transfer of the gamma-phosphate of ATP to D-galactose to form alpha-D-galactose-1-phosphate (Gal-1-P). The polypeptide is Galactokinase (Streptococcus pneumoniae (strain ATCC BAA-255 / R6)).